The following is a 766-amino-acid chain: Serine/threonine-protein kinase DCLK2 (766 aa).

The disordered stretch occupies residues 1–45; the sequence is MASTRSIELEHFEERDKRPRPGSRRGAPSSSGGSSSSGPKGNGLI. Residues 7 to 19 show a composition bias toward basic and acidic residues; that stretch reads IELEHFEERDKRP. Over residues 24-39 the composition is skewed to low complexity; the sequence is RRGAPSSSGGSSSSGP. Phosphothreonine is present on threonine 61. Doublecortin domains follow at residues 72–158 and 197–280; these read KKAR…VDYT and KLVT…AQDD. Composition is skewed to low complexity over residues 300–312 and 324–347; these read AVKY…PGPS and TPSS…SPGS. The interval 300 to 378 is disordered; it reads AVKYSGSKSP…ELDRCISPEG (79 aa). Serine 362 carries the post-translational modification Phosphoserine. Residues 394–651 form the Protein kinase domain; the sequence is YKIGKVIGDG…AGQILSHPWV (258 aa). Residues 400–408 and lysine 423 contribute to the ATP site; that span reads IGDGNFAVV. Aspartate 515 acts as the Proton acceptor in catalysis. Serine 647 carries the post-translational modification Phosphoserine. At threonine 666 the chain carries Phosphothreonine. Positions 707 to 766 are disordered; the sequence is CQDSGRPGMEPISPVPPSVEEIPVPGEAVPAPTPPESPTPHPPPAAPGGERAGTWRRHRD. Residues 724–736 are compositionally biased toward low complexity; sequence SVEEIPVPGEAVP. The span at 737-752 shows a compositional bias: pro residues; the sequence is APTPPESPTPHPPPAA.

The protein belongs to the protein kinase superfamily. CAMK Ser/Thr protein kinase family. CaMK subfamily. In terms of assembly, binds to and stabilizes microtubules. Interacts with MAPK8IP1/JIP-1, MAPK8IP2/JIP-2, MAPK9/JNK2, PPP1R9B/NEURABIN-2 and actin. In terms of processing, autophosphorylated. Expressed in the brain, heart and eyes.

It is found in the cytoplasm. The protein resides in the cytoskeleton. It carries out the reaction L-seryl-[protein] + ATP = O-phospho-L-seryl-[protein] + ADP + H(+). It catalyses the reaction L-threonyl-[protein] + ATP = O-phospho-L-threonyl-[protein] + ADP + H(+). Functionally, protein kinase with a significantly reduced C(a2+)/CAM affinity and dependence compared to other members of the CaMK family. May play a role in the down-regulation of CRE-dependent gene activation probably by phosphorylation of the CREB coactivator CRTC2/TORC2 and the resulting retention of TORC2 in the cytoplasm. The chain is Serine/threonine-protein kinase DCLK2 (DCLK2) from Homo sapiens (Human).